A 68-amino-acid polypeptide reads, in one-letter code: MAESEKLDVSKLTDIEIKEKIDVTRRELFDLRFQRATRQLNETHRFKKARVQLAQLLTAQGERSRSNT.

It belongs to the universal ribosomal protein uL29 family.

The sequence is that of Large ribosomal subunit protein uL29 from Prochlorococcus marinus (strain SARG / CCMP1375 / SS120).